We begin with the raw amino-acid sequence, 428 residues long: Adenylosuccinate synthetase (428 aa).

GTP contacts are provided by residues 12–18 and 40–42; these read GDEGKGK and GHT. Catalysis depends on aspartate 13, which acts as the Proton acceptor. Residues aspartate 13 and glycine 40 each coordinate Mg(2+). Residues 13 to 16, 38 to 41, threonine 129, arginine 143, glutamine 224, threonine 239, and arginine 303 contribute to the IMP site; these read DEGK and NAGH. Histidine 41 functions as the Proton donor in the catalytic mechanism. 299 to 305 provides a ligand contact to substrate; that stretch reads VTTGRIR. GTP-binding positions include arginine 305, 331–333, and 410–412; these read KVD and AYG.

It belongs to the adenylosuccinate synthetase family. Homodimer. Mg(2+) is required as a cofactor.

Its subcellular location is the cytoplasm. It catalyses the reaction IMP + L-aspartate + GTP = N(6)-(1,2-dicarboxyethyl)-AMP + GDP + phosphate + 2 H(+). The protein operates within purine metabolism; AMP biosynthesis via de novo pathway; AMP from IMP: step 1/2. Its function is as follows. Plays an important role in the de novo pathway of purine nucleotide biosynthesis. Catalyzes the first committed step in the biosynthesis of AMP from IMP. In Francisella philomiragia subsp. philomiragia (strain ATCC 25017 / CCUG 19701 / FSC 153 / O#319-036), this protein is Adenylosuccinate synthetase.